A 287-amino-acid polypeptide reads, in one-letter code: Agamous-like MADS-box protein AGL53 (287 aa).

In terms of domain architecture, MADS-box spans 30–78 (STAKKTTNLSMREQTMFKKALELSTLCNIDVCVIYYGRDGKLIKTWPED). Positions 151-171 (EFGQTRAVSSTTNPLSPPPSL) are disordered.

As to quaternary structure, interacts with MEE14/CBP1.

The protein resides in the nucleus. Functionally, probable transcription factor that may function in the maintenance of the proper function of the central cell in pollen tube attraction. In Arabidopsis thaliana (Mouse-ear cress), this protein is Agamous-like MADS-box protein AGL53.